Consider the following 206-residue polypeptide: Probable GTP-binding protein EngB (206 aa).

The 173-residue stretch at 29 to 201 (ILPEVAVVGR…MIMIQDALND (173 aa)) folds into the EngB-type G domain. GTP contacts are provided by residues 37–44 (GRSNVGKS), 64–68 (GKTQA), 82–85 (DLPG), 149–152 (TKID), and 180–182 (YSV). 2 residues coordinate Mg(2+): S44 and T66.

The protein belongs to the TRAFAC class TrmE-Era-EngA-EngB-Septin-like GTPase superfamily. EngB GTPase family. The cofactor is Mg(2+).

Its function is as follows. Necessary for normal cell division and for the maintenance of normal septation. In Protochlamydia amoebophila (strain UWE25), this protein is Probable GTP-binding protein EngB.